The sequence spans 147 residues: Hemoglobin subunit deltaH (147 aa).

The Globin domain occupies 3–147 (RLTDSEKAEV…MANALAHKYH (145 aa)). Heme b contacts are provided by H64 and H93.

Belongs to the globin family. As to quaternary structure, heterotetramer of two delta chains and two alpha chains. Red blood cells.

The sequence is that of Hemoglobin subunit deltaH (HBD) from Dendrohyrax dorsalis (Beecroft's tree hyrax).